The following is a 208-amino-acid chain: Imidazole glycerol phosphate synthase subunit HisH (208 aa).

The Glutamine amidotransferase type-1 domain occupies 1–206; it reads MIVIIDYDTG…KEVIRSCKSS (206 aa). C79 functions as the Nucleophile in the catalytic mechanism. Residues H181 and E183 contribute to the active site.

Heterodimer of HisH and HisF.

It is found in the cytoplasm. It catalyses the reaction 5-[(5-phospho-1-deoxy-D-ribulos-1-ylimino)methylamino]-1-(5-phospho-beta-D-ribosyl)imidazole-4-carboxamide + L-glutamine = D-erythro-1-(imidazol-4-yl)glycerol 3-phosphate + 5-amino-1-(5-phospho-beta-D-ribosyl)imidazole-4-carboxamide + L-glutamate + H(+). The catalysed reaction is L-glutamine + H2O = L-glutamate + NH4(+). The protein operates within amino-acid biosynthesis; L-histidine biosynthesis; L-histidine from 5-phospho-alpha-D-ribose 1-diphosphate: step 5/9. Functionally, IGPS catalyzes the conversion of PRFAR and glutamine to IGP, AICAR and glutamate. The HisH subunit catalyzes the hydrolysis of glutamine to glutamate and ammonia as part of the synthesis of IGP and AICAR. The resulting ammonia molecule is channeled to the active site of HisF. The protein is Imidazole glycerol phosphate synthase subunit HisH of Listeria welshimeri serovar 6b (strain ATCC 35897 / DSM 20650 / CCUG 15529 / CIP 8149 / NCTC 11857 / SLCC 5334 / V8).